We begin with the raw amino-acid sequence, 279 residues long: Proteasome subunit beta (279 aa).

Residues Met-1–Ala-53 constitute a propeptide, removed in mature form; by autocatalysis. Thr-54 serves as the catalytic Nucleophile.

The protein belongs to the peptidase T1B family. In terms of assembly, the 20S proteasome core is composed of 14 alpha and 14 beta subunits that assemble into four stacked heptameric rings, resulting in a barrel-shaped structure. The two inner rings, each composed of seven catalytic beta subunits, are sandwiched by two outer rings, each composed of seven alpha subunits. The catalytic chamber with the active sites is on the inside of the barrel. Has a gated structure, the ends of the cylinder being occluded by the N-termini of the alpha-subunits. Is capped by the proteasome-associated ATPase, ARC.

It is found in the cytoplasm. It carries out the reaction Cleavage of peptide bonds with very broad specificity.. It functions in the pathway protein degradation; proteasomal Pup-dependent pathway. Its activity is regulated as follows. The formation of the proteasomal ATPase ARC-20S proteasome complex, likely via the docking of the C-termini of ARC into the intersubunit pockets in the alpha-rings, may trigger opening of the gate for substrate entry. Interconversion between the open-gate and close-gate conformations leads to a dynamic regulation of the 20S proteasome proteolysis activity. Functionally, component of the proteasome core, a large protease complex with broad specificity involved in protein degradation. This is Proteasome subunit beta from Salinispora arenicola (strain CNS-205).